The sequence spans 141 residues: Large ribosomal subunit protein uL11 (141 aa).

This sequence belongs to the universal ribosomal protein uL11 family. In terms of assembly, part of the ribosomal stalk of the 50S ribosomal subunit. Interacts with L10 and the large rRNA to form the base of the stalk. L10 forms an elongated spine to which L12 dimers bind in a sequential fashion forming a multimeric L10(L12)X complex. One or more lysine residues are methylated.

Its function is as follows. Forms part of the ribosomal stalk which helps the ribosome interact with GTP-bound translation factors. This Clostridium kluyveri (strain ATCC 8527 / DSM 555 / NBRC 12016 / NCIMB 10680 / K1) protein is Large ribosomal subunit protein uL11.